The sequence spans 662 residues: Probable quinol oxidase subunit 1 (662 aa).

The next 2 membrane-spanning stretches (helical) occupy residues 14–34 (WMII…IAVI) and 56–76 (IGIM…IDAL). Position 102 (histidine 102) interacts with Fe(II)-heme a. 8 helical membrane-spanning segments follow: residues 103–123 (GVIM…NVVI), 140–160 (VSFW…IVGG), 187–207 (IAIQ…FVTI), 228–248 (FITT…LALM), 273–293 (FFWV…FGMY), 311–331 (MIWA…HHFF), 336–356 (GALI…PTGV), and 376–396 (MLFS…GVML). Residues histidine 279, tyrosine 283, histidine 328, and histidine 329 each contribute to the Cu cation site. The segment at residues 279–283 (HPEVY) is a cross-link (1'-histidyl-3'-tyrosine (His-Tyr)). Histidine 414 serves as a coordination point for heme a3. Helical transmembrane passes span 415-435 (FHYT…IFWY), 451-471 (CFWF…ILGL), 492-512 (FIST…VASI), 587-604 (PVGF…FFLI), and 608-627 (IVPA…WRSF). Histidine 416 provides a ligand contact to Fe(II)-heme a.

Belongs to the heme-copper respiratory oxidase family. It depends on Cu cation as a cofactor. Requires ferriheme a as cofactor. The cofactor is Heme A3..

Its subcellular location is the cell membrane. It catalyses the reaction 2 a quinol + O2 = 2 a quinone + 2 H2O. It functions in the pathway energy metabolism; oxidative phosphorylation. Catalyzes quinol oxidation with the concomitant reduction of oxygen to water. In Staphylococcus epidermidis (strain ATCC 35984 / DSM 28319 / BCRC 17069 / CCUG 31568 / BM 3577 / RP62A), this protein is Probable quinol oxidase subunit 1 (qoxB).